A 496-amino-acid polypeptide reads, in one-letter code: Ankyrin repeat domain-containing protein 53 (496 aa).

The span at 1–15 (MASAGSTARRAGSGS) shows a compositional bias: low complexity. Positions 1–66 (MASAGSTARR…RPSEESDQTT (66 aa)) are disordered. A compositionally biased stretch (basic and acidic residues) spans 51-60 (AESKQPRPSE). ANK repeat units lie at residues 105–135 (KGFT…PVNL), 139–172 (NSQT…ALNA), and 176–205 (NGCT…NVHA). Residues 292–320 (LVSNTKQARATALSKTPEQRGSQCSSSFH) are disordered.

As to quaternary structure, interacts with PSRC1; recruited by PSRC1 to the spindle during mitosis. Post-translationally, phosphorylated during mitosis.

Its subcellular location is the cytoplasm. It localises to the cytoskeleton. The protein localises to the spindle. It is found in the spindle pole. In terms of biological role, required for normal progression through mitosis. Involved in chromosome alignment and cytokinesis via regulation of microtubules polymerization. In Macaca fascicularis (Crab-eating macaque), this protein is Ankyrin repeat domain-containing protein 53 (ANKRD53).